The chain runs to 415 residues: Amino acid decarboxylase lolD2 (415 aa).

An N6-(pyridoxal phosphate)lysine modification is found at Lys62. Residues Ser194, Gly231, and 266–269 each bind pyridoxal 5'-phosphate; that span reads EPGT. Residue 315-316 participates in substrate binding; sequence IV. Cys351 functions as the Proton donor; shared with dimeric partner in the catalytic mechanism. The residue at position 351 (Cys351) is an S-nitrosocysteine. Asp352 serves as a coordination point for substrate. A pyridoxal 5'-phosphate-binding site is contributed by Tyr381.

Belongs to the Orn/Lys/Arg decarboxylase class-II family. In terms of assembly, homodimer. It depends on pyridoxal 5'-phosphate as a cofactor.

It functions in the pathway alkaloid biosynthesis. Its function is as follows. Amino acid decarboxylase; part of the gene cluster that mediates the biosynthesis of loline alkaloids, potent insecticidal agents composed of a pyrrolizidine ring system and an uncommon ether bridge linking carbons 2 and 7. Lolines are structurally differentiated by the various modifications of the L-amino group and include norloline, loline, N-methylloline, N-acetylloline, N-acetylnorloline, and N-formylloline. The first committed step is the condensation of O-acetyl-L-homoserine (derived from L-aspartic acid) and L-proline, probably catalyzed by the gamma-type pyridoxal 5'-phosphate(PLP)-dependent enzyme lolC, to give the diamino diacid, NACPP. Ensuing cyclization, decarboxylation, and acetylation steps yield 1-exo-acetamidopyrrolizidine (AcAP). LolO is required for installation of the ether bridge upon the pathway intermediate, 1-exo-acetamidopyrrolizidine (AcAP). In sequential 2-oxoglutarate- and O(2)-consuming steps, lolO removes hydrogens from C2 and C7 of AcAP to form both carbon-oxygen bonds in N-acetylnorloline (NANL), the precursor to all other lolines. The enzymes lolD, lolE, lolF and lolT have also been proposed to be involved in the ether-bridge installation. Further processing of the exocyclic moiety of NANL by fungal N-acetamidase (LolN), methyltransferase (LolM), and cytochrome P450 (LolP) enzymes, with occasional involvement of a plant acetyltransferase, generates the other known lolines. LolN transforms NANL to norlonine which is monomethylated and dimethylated to respectively lonine and N-methyllonine (NML) by lolM. LolP catalyzes hydroxylation of the methyl group in N-methylloline (NML) and further oxygenation to N-formylloline (NFL). A plant acetyltransferase is responsible for the acetylation of loline to form N-acetylloline (NAL). LolA might interact with aspartate kinase to prevent feedback inhibition of its activity by these end products and thereby promote production of L-homoserine from L-aspartate. The polypeptide is Amino acid decarboxylase lolD2 (Epichloe uncinata (Endophyte fungus)).